A 209-amino-acid polypeptide reads, in one-letter code: Cytidylyl-2-hydroxypropylphosphonate hydrolase (209 aa).

A divalent metal cation is bound by residues Asn-111, Asp-127, Glu-129, and Asp-131. Residue Lys-144 is the Proton donor of the active site. Asp-145 is a binding site for a divalent metal cation.

The protein belongs to the FomD family. In terms of assembly, monomer in solution. Mn(2+) is required as a cofactor. Requires Co(2+) as cofactor.

It carries out the reaction cytidine 5'-({hydroxy[(S)-2-hydroxypropyl]phosphonoyl}phosphate) + H2O = (S)-2-hydroxypropylphosphonate + CMP + H(+). It participates in antibiotic biosynthesis; fosfomycin biosynthesis. Its activity is regulated as follows. Hydrolysis of (S)-HPP-CMP is inhibited by CDP. Involved in fosfomycin biosynthesis. Catalyzes the hydrolysis of cytidylyl (S)-2-hydroxypropylphosphonate ((S)-HPP-CMP) to give (S)-2-hydroxypropylphosphonate ((S)-HPP) and CMP. Can also hydrolyze (R)-HPP-CMP and cytidylyl 2-hydroxyethylphosphonate (HEP-CMP), which is a biosynthetic intermediate before C-methylation, but the catalytic efficiency is much higher with (S)-HPP-CMP. The sequence is that of Cytidylyl-2-hydroxypropylphosphonate hydrolase from Streptomyces wedmorensis.